The following is a 619-amino-acid chain: Translation initiation factor IF-2 (619 aa).

Composition is skewed to low complexity over residues methionine 1–lysine 18 and proline 98–threonine 111. 2 disordered regions span residues methionine 1–aspartate 24 and serine 90–proline 113. Positions lysine 121 to leucine 289 constitute a tr-type G domain. The G1 stretch occupies residues glycine 130–threonine 137. Glycine 130–threonine 137 contributes to the GTP binding site. The segment at glycine 155–histidine 159 is G2. The G3 stretch occupies residues aspartate 176–glycine 179. GTP-binding positions include aspartate 176 to histidine 180 and asparagine 230 to aspartate 233. The G4 stretch occupies residues asparagine 230 to aspartate 233. Positions serine 266–leucine 268 are G5.

This sequence belongs to the TRAFAC class translation factor GTPase superfamily. Classic translation factor GTPase family. IF-2 subfamily.

It is found in the cytoplasm. Its function is as follows. One of the essential components for the initiation of protein synthesis. Protects formylmethionyl-tRNA from spontaneous hydrolysis and promotes its binding to the 30S ribosomal subunits. Also involved in the hydrolysis of GTP during the formation of the 70S ribosomal complex. This chain is Translation initiation factor IF-2, found in Onion yellows phytoplasma (strain OY-M).